The sequence spans 40 residues: Photosystem II reaction center protein J (40 aa).

The chain crosses the membrane as a helical span at residues 8-28; the sequence is IPLWLIGTLTGILVIGLIGIF.

It belongs to the PsbJ family. In terms of assembly, PSII is composed of 1 copy each of membrane proteins PsbA, PsbB, PsbC, PsbD, PsbE, PsbF, PsbH, PsbI, PsbJ, PsbK, PsbL, PsbM, PsbT, PsbX, PsbY, PsbZ, Psb30/Ycf12, at least 3 peripheral proteins of the oxygen-evolving complex and a large number of cofactors. It forms dimeric complexes.

The protein localises to the plastid. The protein resides in the chloroplast thylakoid membrane. Its function is as follows. One of the components of the core complex of photosystem II (PSII). PSII is a light-driven water:plastoquinone oxidoreductase that uses light energy to abstract electrons from H(2)O, generating O(2) and a proton gradient subsequently used for ATP formation. It consists of a core antenna complex that captures photons, and an electron transfer chain that converts photonic excitation into a charge separation. This chain is Photosystem II reaction center protein J, found in Phalaenopsis aphrodite subsp. formosana (Moth orchid).